A 61-amino-acid polypeptide reads, in one-letter code: Protein MATERNALLY EXPRESSED GENE 6 (61 aa).

The cysteines at positions 38 and 60 are disulfide-linked.

This sequence belongs to the MEG family. As to expression, ubiquitous.

The polypeptide is Protein MATERNALLY EXPRESSED GENE 6 (MEG6) (Zea mays (Maize)).